Reading from the N-terminus, the 1094-residue chain is MGSVDTSVPSFDRAWSIKYEDLDFISEIGSGGFGKVFKGEYLGAPVAIKKIHILPDDPNRVDLEKFLNREIETIKLFTHPNVIQFVGISENNGILFIVTELIEGGDLQYYLKNQSIDLPWFLRANIALDVSLAMSYLHSKSIVHRDLKSTNLLVDKNWKIKVCDFGFARIVEEDNNKSMTICGTDNWMSPEMITGLDYDERSDIFSFGIVLLEIISRVKPAPYMRDASFGLAEDIVRNQLIPTDCPESLIDLTFNCCSVDPNNRPSFKEISQTLKQIKTTLDSNIVYPEIRDFEQQQKISTTNGNNKQNGGAPKINNLPLQYSNNNNNIYDDDDDDDDDDDDNDSFPRPYSDNSNSNVTLESNSNYNSSTINGQEQQEQQEQQQQQQVKEERDEGEIEQDDDNIEVYDSDYQKKLEEHQKELLERQNQNQEGSTDENEVYEQEEEEEEEDEEEQVISTPAKKRISFGQDTFHTYEAYRTDDEDDDDDEEDEEEGDEYDHGYDDFDEDDEDDEEYDEDEDDEDERQIQYYQQQLQYQQQLQKQQEQEYQRQQQLQLQREEEEYQRQLQQQQQQQQQQQQQQQQHQQQYDDDDDDDDEEEEEYDDVIRHDTDSEEESKDKTPLPWDQHFEKQKESENKVEQEETNVVVANSQETEQQQQQQQQPKEEEEEEPTKVEDVKVETEEQTKEEHDVKVDEESTKVDEPVDEPTKVEESVEQVKAEEPNKVEELVEEVKVEEEPTNVEEVKAEEPVEEVKVEEPVEEVKAEEPVEEVKAEEPVEEVKTEEPVEEVKVEEPVEEVKVEEPVEEVEAEESVQEPVEEVKVDEPTKVEEPTKVEEPIEEVKVEEPTKVEESIEEVKVEEPTKVEEPVEEIKPEEPTKVEESVEDVKVEDVKVEEVKAEEPTKAEESVEDVKVEEPIKVEEPVKVEEPVKVEEPVKVEEPIKVEEPIKVEEPIKVEEPIKVEEPIKVEEPVKVEVASPVVQEQPPQQEEKPEVVSTSTITIASSPQQSSNSPPSTPVKQPQQQEIEVNSTPIKQQQQQQQTPTQQTQTPTKQHTEINVQPTPTKTPPLPPQTNEKIPLISPNNKSNRGCCSCFIQ.

The Protein kinase domain maps to 22–281; that stretch reads LDFISEIGSG…QTLKQIKTTL (260 aa). ATP-binding positions include 28 to 36 and lysine 49; that span reads IGSGGFGKV. Aspartate 146 serves as the catalytic Proton acceptor. Disordered regions lie at residues 301-884 and 946-1083; these read TTNG…SVED and IKVE…PNNK. Residues 330–344 show a composition bias toward acidic residues; the sequence is YDDDDDDDDDDDDND. Positions 351–373 are enriched in polar residues; sequence SDNSNSNVTLESNSNYNSSTING. The span at 374-387 shows a compositional bias: low complexity; the sequence is QEQQEQQEQQQQQQ. A compositionally biased stretch (acidic residues) spans 393–408; the sequence is DEGEIEQDDDNIEVYD. Over residues 410–424 the composition is skewed to basic and acidic residues; that stretch reads DYQKKLEEHQKELLE. Composition is skewed to acidic residues over residues 433–454, 480–496, and 503–523; these read STDE…EEEQ, DDED…EGDE, and DFDE…DEDE. 2 stretches are compositionally biased toward low complexity: residues 526–542 and 564–585; these read IQYY…LQKQ and RQLQ…QHQQ. The span at 587–602 shows a compositional bias: acidic residues; it reads YDDDDDDDDEEEEEYD. The span at 603–639 shows a compositional bias: basic and acidic residues; sequence DVIRHDTDSEEESKDKTPLPWDQHFEKQKESENKVEQ. The span at 650 to 661 shows a compositional bias: low complexity; it reads QETEQQQQQQQQ. Residues 670-801 show a composition bias toward basic and acidic residues; the sequence is PTKVEDVKVE…EPVEEVKVEE (132 aa). The segment at 676–978 is 40 X 9 AA approximate repeats of V-K-V-E-E-P-V-E-E; sequence VKVETEEQTK…PVKVEVASPV (303 aa). Residues 802–816 show a composition bias toward acidic residues; it reads PVEEVEAEESVQEPV. Composition is skewed to basic and acidic residues over residues 817 to 884 and 946 to 971; these read EEVK…SVED and IKVE…EPVK. Low complexity-rich tracts occupy residues 972–985 and 992–1011; these read VEVA…QPPQ and VVST…SNSP. Positions 1016–1031 are enriched in polar residues; sequence VKQPQQQEIEVNSTPI. Low complexity predominate over residues 1032 to 1050; that stretch reads KQQQQQQQTPTQQTQTPTK.

The protein belongs to the protein kinase superfamily. TKL Ser/Thr protein kinase family.

It carries out the reaction L-seryl-[protein] + ATP = O-phospho-L-seryl-[protein] + ADP + H(+). It catalyses the reaction L-threonyl-[protein] + ATP = O-phospho-L-threonyl-[protein] + ADP + H(+). This Dictyostelium discoideum (Social amoeba) protein is Probable serine/threonine-protein kinase kinX (kinX).